Reading from the N-terminus, the 367-residue chain is Polygalacturonase (367 aa).

An N-terminal signal peptide occupies residues 1–19 (MSIRLIAVLSAASIAVTSA). Cysteines 27 and 42 form a disulfide. N-linked (GlcNAc...) asparagine glycosylation occurs at asparagine 185. One copy of the PbH1 1 repeat lies at 187 to 208 (TDQLTIEDTVVKNQDDCIAVNQ). The active-site Proton donor is aspartate 201. The cysteines at positions 203 and 219 are disulfide-linked. The active site involves histidine 223. The stretch at 240–261 (VRNVTFSNSVVRKSRNGIHIKT) is one PbH1 2 repeat. Asparagine 242 carries N-linked (GlcNAc...) asparagine glycosylation. An intrachain disulfide couples cysteine 334 to cysteine 339. N-linked (GlcNAc...) asparagine glycans are attached at residues asparagine 343 and asparagine 357. Cysteines 358 and 367 form a disulfide.

It belongs to the glycosyl hydrolase 28 family. As to expression, expressed in larval carcasses and gut, and adult gut.

It is found in the secreted. Its subcellular location is the cell wall. It carries out the reaction (1,4-alpha-D-galacturonosyl)n+m + H2O = (1,4-alpha-D-galacturonosyl)n + (1,4-alpha-D-galacturonosyl)m.. This is Polygalacturonase from Phaedon cochleariae (Mustard beetle).